We begin with the raw amino-acid sequence, 50 residues long: Major pollen allergen Ole e 6 (50 aa).

3 disulfide bridges follow: Cys-8–Cys-34, Cys-12–Cys-30, and Cys-16–Cys-26.

As to expression, expressed in pollen.

This Olea europaea (Common olive) protein is Major pollen allergen Ole e 6 (OLE6).